The following is a 1308-amino-acid chain: Cadherin-related family member 2 (1308 aa).

The N-terminal stretch at 1-20 is a signal peptide; sequence MAWLWLLCALLPAFMVSVTA. Residues 21–1152 are Extracellular-facing; that stretch reads NSPPSFGVNM…EPDQQKLLTS (1132 aa). Cadherin domains are found at residues 33-124, 125-241, 242-353, 368-480, 481-586, 586-695, 695-807, 809-927, and 929-1051; these read VTLP…IPVF, LNTE…DPRF, IREF…KPEF, AQVN…RPVF, SQSL…PPVV, VRGS…LPVF, FNQS…PPTL, AASL…APYF, and PNNQ…RLQF. The helical transmembrane segment at 1153–1173 threads the bilayer; the sequence is VIIGLVVSLVLVLVILITALV. Residues 1174-1308 lie on the Cytoplasmic side of the membrane; sequence CLRKSYHRKL…TNPGLDTTDL (135 aa). The interval 1178-1308 is mediates interaction with USH1C and MYO7B and is required for proper localization to microvilli tips and function in microvilli organization; it reads SYHRKLRAMK…TNPGLDTTDL (131 aa). Residue Ser1245 is modified to Phosphoserine. The disordered stretch occupies residues 1251 to 1308; the sequence is VDLDMDSKEFKRKDLPGDPPEPDPEPLTAVLSGRSAGASEQQKKNLSFTNPGLDTTDL. Over residues 1255 to 1266 the composition is skewed to basic and acidic residues; it reads MDSKEFKRKDLP. Over residues 1288-1308 the composition is skewed to polar residues; sequence ASEQQKKNLSFTNPGLDTTDL. Phosphoserine is present on Ser1297.

Part of the IMAC/intermicrovillar adhesion complex/intermicrovillar tip-link complex composed of ANKS4B, MYO7B, USH1C, CDHR2 and CDHR5. Interacts with MAST2. Interacts (via cytoplasmic domain) with USH1C and MYO7B; required for proper localization of CDHR2 to microvilli tips and its function in brush border differentiation.

It localises to the apical cell membrane. The protein resides in the cell projection. The protein localises to the microvillus membrane. It is found in the cell junction. Intermicrovillar adhesion molecule that forms, via its extracellular domain, calcium-dependent heterophilic complexes with CDHR5 on adjacent microvilli. Thereby, controls the packing of microvilli at the apical membrane of epithelial cells. Through its cytoplasmic domain, interacts with microvillus cytoplasmic proteins to form the intermicrovillar adhesion complex/IMAC. This complex plays a central role in microvilli and epithelial brush border differentiation. May also play a role in cell-cell adhesion and contact inhibition in epithelial cells. The sequence is that of Cadherin-related family member 2 from Mus musculus (Mouse).